The primary structure comprises 137 residues: Methylglyoxal synthase (137 aa).

The region spanning 1 to 137 (MNIALVAHDQ…EVRKSKSQRI (137 aa)) is the MGS-like domain. Residues H8, K12, 34-37 (TGTT), and 54-55 (SG) each bind substrate. The active-site Proton donor/acceptor is D60. H87 is a substrate binding site.

The protein belongs to the methylglyoxal synthase family.

It catalyses the reaction dihydroxyacetone phosphate = methylglyoxal + phosphate. In terms of biological role, catalyzes the formation of methylglyoxal from dihydroxyacetone phosphate. In Clostridioides difficile (strain 630) (Peptoclostridium difficile), this protein is Methylglyoxal synthase.